Reading from the N-terminus, the 428-residue chain is Glutamyl-tRNA reductase (428 aa).

Substrate-binding positions include 49–52 (TCNR), S109, 114–116 (EGQ), and Q120. C50 serves as the catalytic Nucleophile. 189-194 (GAGKMA) contacts NADP(+).

This sequence belongs to the glutamyl-tRNA reductase family. As to quaternary structure, homodimer.

The enzyme catalyses (S)-4-amino-5-oxopentanoate + tRNA(Glu) + NADP(+) = L-glutamyl-tRNA(Glu) + NADPH + H(+). The protein operates within porphyrin-containing compound metabolism; protoporphyrin-IX biosynthesis; 5-aminolevulinate from L-glutamyl-tRNA(Glu): step 1/2. It functions in the pathway porphyrin-containing compound metabolism; chlorophyll biosynthesis. Its function is as follows. Catalyzes the NADPH-dependent reduction of glutamyl-tRNA(Glu) to glutamate 1-semialdehyde (GSA). The protein is Glutamyl-tRNA reductase of Rippkaea orientalis (strain PCC 8801 / RF-1) (Cyanothece sp. (strain PCC 8801)).